The primary structure comprises 291 residues: ATP synthase gamma chain (291 aa).

The protein belongs to the ATPase gamma chain family. As to quaternary structure, F-type ATPases have 2 components, CF(1) - the catalytic core - and CF(0) - the membrane proton channel. CF(1) has five subunits: alpha(3), beta(3), gamma(1), delta(1), epsilon(1). CF(0) has three main subunits: a, b and c.

It is found in the cell membrane. In terms of biological role, produces ATP from ADP in the presence of a proton gradient across the membrane. The gamma chain is believed to be important in regulating ATPase activity and the flow of protons through the CF(0) complex. The sequence is that of ATP synthase gamma chain from Streptococcus pyogenes serotype M1.